A 77-amino-acid chain; its full sequence is NAD(P)H-quinone oxidoreductase subunit L (77 aa).

Helical transmembrane passes span 12–32 (LIAYMGVITIYLLVIPLLLFY) and 47–67 (LGIYGLVFLFFPGLILFSPFL).

The protein belongs to the complex I NdhL subunit family. NDH-1 can be composed of about 15 different subunits; different subcomplexes with different compositions have been identified which probably have different functions.

Its subcellular location is the cellular thylakoid membrane. It catalyses the reaction a plastoquinone + NADH + (n+1) H(+)(in) = a plastoquinol + NAD(+) + n H(+)(out). It carries out the reaction a plastoquinone + NADPH + (n+1) H(+)(in) = a plastoquinol + NADP(+) + n H(+)(out). NDH-1 shuttles electrons from an unknown electron donor, via FMN and iron-sulfur (Fe-S) centers, to quinones in the respiratory and/or the photosynthetic chain. The immediate electron acceptor for the enzyme in this species is believed to be plastoquinone. Couples the redox reaction to proton translocation, and thus conserves the redox energy in a proton gradient. Cyanobacterial NDH-1 also plays a role in inorganic carbon-concentration. In Prochlorococcus marinus (strain MIT 9312), this protein is NAD(P)H-quinone oxidoreductase subunit L.